The sequence spans 233 residues: 5'-methylthioadenosine/S-adenosylhomocysteine nucleosidase (233 aa).

Glutamate 12 serves as the catalytic Proton acceptor. Substrate-binding positions include glycine 78, isoleucine 152, and 173-174; that span reads ME. Residue aspartate 197 is the Proton donor of the active site.

It belongs to the PNP/UDP phosphorylase family. MtnN subfamily. Homodimer.

The enzyme catalyses S-adenosyl-L-homocysteine + H2O = S-(5-deoxy-D-ribos-5-yl)-L-homocysteine + adenine. It catalyses the reaction S-methyl-5'-thioadenosine + H2O = 5-(methylsulfanyl)-D-ribose + adenine. It carries out the reaction 5'-deoxyadenosine + H2O = 5-deoxy-D-ribose + adenine. Its pathway is amino-acid biosynthesis; L-methionine biosynthesis via salvage pathway; S-methyl-5-thio-alpha-D-ribose 1-phosphate from S-methyl-5'-thioadenosine (hydrolase route): step 1/2. In terms of biological role, catalyzes the irreversible cleavage of the glycosidic bond in both 5'-methylthioadenosine (MTA) and S-adenosylhomocysteine (SAH/AdoHcy) to adenine and the corresponding thioribose, 5'-methylthioribose and S-ribosylhomocysteine, respectively. Also cleaves 5'-deoxyadenosine, a toxic by-product of radical S-adenosylmethionine (SAM) enzymes, into 5-deoxyribose and adenine. Thus, is required for in vivo function of the radical SAM enzymes biotin synthase and lipoic acid synthase, that are inhibited by 5'-deoxyadenosine accumulation. This chain is 5'-methylthioadenosine/S-adenosylhomocysteine nucleosidase, found in Yersinia enterocolitica serotype O:8 / biotype 1B (strain NCTC 13174 / 8081).